We begin with the raw amino-acid sequence, 461 residues long: Bifunctional protein GlmU (461 aa).

Residues 1 to 243 (MNATVPSAAP…EDELRGINSR (243 aa)) form a pyrophosphorylase region. Residues 24-27 (LAAG), Lys38, Gln86, 91-92 (GT), 112-114 (YGD), Gly155, Glu169, Asn184, and Asn241 contribute to the UDP-N-acetyl-alpha-D-glucosamine site. Asp114 is a binding site for Mg(2+). A Mg(2+)-binding site is contributed by Asn241. The linker stretch occupies residues 244–264 (AELAEAEACVQRRLRAAALDG). Residues 265 to 461 (GATLVAPETV…AALRRKKEQG (197 aa)) are N-acetyltransferase. UDP-N-acetyl-alpha-D-glucosamine-binding residues include Arg330 and Lys348. His360 serves as the catalytic Proton acceptor. Tyr363 and Asn374 together coordinate UDP-N-acetyl-alpha-D-glucosamine. Residues Ala377, 383-384 (NY), Ser402, Ala420, and Arg437 contribute to the acetyl-CoA site.

The protein in the N-terminal section; belongs to the N-acetylglucosamine-1-phosphate uridyltransferase family. This sequence in the C-terminal section; belongs to the transferase hexapeptide repeat family. In terms of assembly, homotrimer. Mg(2+) serves as cofactor.

The protein resides in the cytoplasm. It catalyses the reaction alpha-D-glucosamine 1-phosphate + acetyl-CoA = N-acetyl-alpha-D-glucosamine 1-phosphate + CoA + H(+). The enzyme catalyses N-acetyl-alpha-D-glucosamine 1-phosphate + UTP + H(+) = UDP-N-acetyl-alpha-D-glucosamine + diphosphate. It participates in nucleotide-sugar biosynthesis; UDP-N-acetyl-alpha-D-glucosamine biosynthesis; N-acetyl-alpha-D-glucosamine 1-phosphate from alpha-D-glucosamine 6-phosphate (route II): step 2/2. The protein operates within nucleotide-sugar biosynthesis; UDP-N-acetyl-alpha-D-glucosamine biosynthesis; UDP-N-acetyl-alpha-D-glucosamine from N-acetyl-alpha-D-glucosamine 1-phosphate: step 1/1. It functions in the pathway bacterial outer membrane biogenesis; LPS lipid A biosynthesis. Catalyzes the last two sequential reactions in the de novo biosynthetic pathway for UDP-N-acetylglucosamine (UDP-GlcNAc). The C-terminal domain catalyzes the transfer of acetyl group from acetyl coenzyme A to glucosamine-1-phosphate (GlcN-1-P) to produce N-acetylglucosamine-1-phosphate (GlcNAc-1-P), which is converted into UDP-GlcNAc by the transfer of uridine 5-monophosphate (from uridine 5-triphosphate), a reaction catalyzed by the N-terminal domain. The chain is Bifunctional protein GlmU from Gluconacetobacter diazotrophicus (strain ATCC 49037 / DSM 5601 / CCUG 37298 / CIP 103539 / LMG 7603 / PAl5).